Consider the following 491-residue polypeptide: Lysine--tRNA ligase (491 aa).

2 residues coordinate Mg(2+): E399 and E406.

It belongs to the class-II aminoacyl-tRNA synthetase family. In terms of assembly, homodimer. Mg(2+) is required as a cofactor.

It is found in the cytoplasm. It catalyses the reaction tRNA(Lys) + L-lysine + ATP = L-lysyl-tRNA(Lys) + AMP + diphosphate. This Chloroflexus aurantiacus (strain ATCC 29366 / DSM 635 / J-10-fl) protein is Lysine--tRNA ligase.